The sequence spans 393 residues: NAD(P)H-quinone oxidoreductase subunit H, chloroplastic (393 aa).

The protein belongs to the complex I 49 kDa subunit family. In terms of assembly, NDH is composed of at least 16 different subunits, 5 of which are encoded in the nucleus.

It is found in the plastid. The protein resides in the chloroplast thylakoid membrane. It catalyses the reaction a plastoquinone + NADH + (n+1) H(+)(in) = a plastoquinol + NAD(+) + n H(+)(out). The catalysed reaction is a plastoquinone + NADPH + (n+1) H(+)(in) = a plastoquinol + NADP(+) + n H(+)(out). Functionally, NDH shuttles electrons from NAD(P)H:plastoquinone, via FMN and iron-sulfur (Fe-S) centers, to quinones in the photosynthetic chain and possibly in a chloroplast respiratory chain. The immediate electron acceptor for the enzyme in this species is believed to be plastoquinone. Couples the redox reaction to proton translocation, and thus conserves the redox energy in a proton gradient. In Nuphar advena (Common spatterdock), this protein is NAD(P)H-quinone oxidoreductase subunit H, chloroplastic.